A 289-amino-acid chain; its full sequence is Oxaloacetate decarboxylase (289 aa).

Substrate is bound at residue Ser-50. Asp-88 serves as a coordination point for Mg(2+). The substrate site is built by Arg-159 and His-235.

Belongs to the isocitrate lyase/PEP mutase superfamily. Oxaloacetate decarboxylase family. In terms of assembly, homotetramer; dimer of dimers. Mg(2+) serves as cofactor.

The catalysed reaction is oxaloacetate + H(+) = pyruvate + CO2. Functionally, catalyzes the decarboxylation of oxaloacetate into pyruvate. Seems to play a role in maintaining cellular concentrations of bicarbonate and pyruvate. The protein is Oxaloacetate decarboxylase of Pseudomonas putida (strain ATCC 47054 / DSM 6125 / CFBP 8728 / NCIMB 11950 / KT2440).